The primary structure comprises 207 residues: Large ribosomal subunit protein uL4 (207 aa).

The disordered stretch occupies residues 55 to 75 (SAVRGGGRKPWRQKGTGRARQ). Basic residues predominate over residues 60-71 (GGRKPWRQKGTG).

This sequence belongs to the universal ribosomal protein uL4 family. In terms of assembly, part of the 50S ribosomal subunit.

In terms of biological role, one of the primary rRNA binding proteins, this protein initially binds near the 5'-end of the 23S rRNA. It is important during the early stages of 50S assembly. It makes multiple contacts with different domains of the 23S rRNA in the assembled 50S subunit and ribosome. Functionally, forms part of the polypeptide exit tunnel. This is Large ribosomal subunit protein uL4 from Staphylococcus epidermidis (strain ATCC 35984 / DSM 28319 / BCRC 17069 / CCUG 31568 / BM 3577 / RP62A).